The primary structure comprises 99 residues: UPF0751 protein BAMEG_A0107 (99 aa).

Belongs to the UPF0751 family.

The sequence is that of UPF0751 protein BAMEG_A0107 from Bacillus anthracis (strain CDC 684 / NRRL 3495).